The sequence spans 69 residues: Conotoxin Lt5.7 (69 aa).

The N-terminal stretch at 1-19 (MLCLPVFIILLLLASPAAP) is a signal peptide. The propeptide occupies 20-54 (KSLETRIQNDLIRAGLTDADLKTEKGFLSGLLNVA).

Belongs to the conotoxin T superfamily. Post-translationally, contains 2 disulfide bonds that can be either 'C1-C3, C2-C4' or 'C1-C4, C2-C3', since these disulfide connectivities have been observed for conotoxins with cysteine framework V (for examples, see AC P0DQQ7 and AC P81755). As to expression, expressed by the venom duct.

Its subcellular location is the secreted. This chain is Conotoxin Lt5.7, found in Conus litteratus (Lettered cone).